Reading from the N-terminus, the 221-residue chain is MKKIVSILFMFGLVMGFSQFQPSTVFAADKVVHETIIVPKNTTYDGKGQRFVAGKELGDGSQSENQDPVFRVEDGATLKNVVLGAPAADGVHTYGNVNIQNVKWEDVGEDALTVKKEGKVTIDGGSAQKASDKIFQINKASTFTVKNFTADNGGKFIRQLGGSTFHVDVIIDKCTITNMKEAIFRTDSKTSTVRMTNTRYSNVGQKWIGVQHIYENNNTQF.

An N-terminal signal peptide occupies residues 1–27; the sequence is MKKIVSILFMFGLVMGFSQFQPSTVFA.

The protein belongs to the polysaccharide lyase 3 family. Ca(2+) is required as a cofactor.

It localises to the secreted. It catalyses the reaction Eliminative cleavage of (1-&gt;4)-alpha-D-galacturonan to give oligosaccharides with 4-deoxy-alpha-D-galact-4-enuronosyl groups at their non-reducing ends.. The catalysed reaction is Eliminative cleavage of (1-&gt;4)-alpha-D-galacturonan methyl ester to give oligosaccharides with 4-deoxy-6-O-methyl-alpha-D-galact-4-enuronosyl groups at their non-reducing ends.. It functions in the pathway glycan metabolism; pectin degradation; 2-dehydro-3-deoxy-D-gluconate from pectin: step 2/5. Catalyzes the depolymerization of both polygalacturonate and pectins of methyl esterification degree from 22 to 89%, with an endo mode of action. In contrast to the majority of pectate lyases, displays high activity on highly methylated pectins. Is also able to cleave trigalacturonate to galacturonic acid and unsaturated digalacturonate. This is Pectate lyase C (pelC) from Bacillus subtilis (strain 168).